The following is a 363-amino-acid chain: Ribosomal RNA large subunit methyltransferase M (363 aa).

S-adenosyl-L-methionine contacts are provided by residues Ser194, 227–230, Asp246, Asp266, and Asp284; that span reads CPGG. Lys313 (proton acceptor) is an active-site residue.

Belongs to the class I-like SAM-binding methyltransferase superfamily. RNA methyltransferase RlmE family. RlmM subfamily. Monomer.

The protein resides in the cytoplasm. It catalyses the reaction cytidine(2498) in 23S rRNA + S-adenosyl-L-methionine = 2'-O-methylcytidine(2498) in 23S rRNA + S-adenosyl-L-homocysteine + H(+). In terms of biological role, catalyzes the 2'-O-methylation at nucleotide C2498 in 23S rRNA. The polypeptide is Ribosomal RNA large subunit methyltransferase M (Haemophilus influenzae (strain 86-028NP)).